The primary structure comprises 140 residues: uncharacterized protein (140 aa).

This is an uncharacterized protein from Archaeoglobus fulgidus (strain ATCC 49558 / DSM 4304 / JCM 9628 / NBRC 100126 / VC-16).